The following is a 507-amino-acid chain: Cyclin-dependent kinase-like 2 (507 aa).

Residues 4-289 enclose the Protein kinase domain; sequence YENLGLVGEG…CADLLHHDFF (286 aa). ATP is bound by residues 10 to 18 and K33; that span reads VGEGSYGMV. Positions 45–51 match the [NKR]KIAxRE motif; sequence KKIAMRE. The Proton acceptor role is filled by D126. The segment at 365-392 is disordered; sequence KTEKGTRASNGSCLHDNGTSHKGLSSTS.

It belongs to the protein kinase superfamily. CMGC Ser/Thr protein kinase family. CDC2/CDKX subfamily.

The protein localises to the cytoplasm. Its subcellular location is the nucleus. It catalyses the reaction L-seryl-[protein] + ATP = O-phospho-L-seryl-[protein] + ADP + H(+). The catalysed reaction is L-threonyl-[protein] + ATP = O-phospho-L-threonyl-[protein] + ADP + H(+). The polypeptide is Cyclin-dependent kinase-like 2 (Rattus norvegicus (Rat)).